Here is a 500-residue protein sequence, read N- to C-terminus: Lysine--tRNA ligase (500 aa).

Residues E410 and E417 each coordinate Mg(2+).

The protein belongs to the class-II aminoacyl-tRNA synthetase family. In terms of assembly, homodimer. It depends on Mg(2+) as a cofactor.

The protein resides in the cytoplasm. The enzyme catalyses tRNA(Lys) + L-lysine + ATP = L-lysyl-tRNA(Lys) + AMP + diphosphate. This is Lysine--tRNA ligase from Shewanella sp. (strain ANA-3).